A 51-amino-acid polypeptide reads, in one-letter code: Probable antitoxin PhoAT (51 aa).

This sequence belongs to the PhoAT antitoxin family. Interacts with toxin PhoH2.

Functionally, antitoxin component of a type II toxin-antitoxin (TA) system. The cognate antitoxin is PhoAT; the toxin gene cannot be expressed in the absence of the antitoxin gene in M.smegmatis (strain mc(2)4517), and abrogates the toxic effects of PhoH2 in M.smegmatis strain mc(2)155. The protein is Probable antitoxin PhoAT of Mycobacterium tuberculosis (strain ATCC 25618 / H37Rv).